The primary structure comprises 54 residues: UPF0391 membrane protein Aave_3864 (54 aa).

Helical transmembrane passes span 5 to 25 and 28 to 48; these read AVVFLVIALIAALFGFGGIAA and VGIAKILFFVFVIMAVVTFVL.

This sequence belongs to the UPF0391 family.

Its subcellular location is the cell membrane. The protein is UPF0391 membrane protein Aave_3864 of Paracidovorax citrulli (strain AAC00-1) (Acidovorax citrulli).